The chain runs to 734 residues: Polyphosphate kinase (734 aa).

Asparagine 67 is an ATP binding site. Residues arginine 392 and arginine 422 each contribute to the Mg(2+) site. One can recognise a PLD phosphodiesterase domain in the interval 447 to 481 (THLKTHSKIALVVKRINNELTSFVHLGTGNYNDKT). The active-site Phosphohistidine intermediate is the histidine 452. ATP is bound by residues tyrosine 485, arginine 581, and histidine 609. The disordered stretch occupies residues 705–734 (KKQSVQPSGQPVHSRRGGSWMRKLKNTFKR).

Belongs to the polyphosphate kinase 1 (PPK1) family. The cofactor is Mg(2+). Post-translationally, an intermediate of this reaction is the autophosphorylated ppk in which a phosphate is covalently linked to a histidine residue through a N-P bond.

It carries out the reaction [phosphate](n) + ATP = [phosphate](n+1) + ADP. Catalyzes the reversible transfer of the terminal phosphate of ATP to form a long-chain polyphosphate (polyP). The sequence is that of Polyphosphate kinase from Staphylococcus epidermidis (strain ATCC 12228 / FDA PCI 1200).